The sequence spans 550 residues: Protein UshA (550 aa).

Positions 1 to 25 (MRFSLSTTAAALAVSLAFAPGWAVA) are cleaved as a signal peptide. Residues D41, H43, D84, N116, H217, H252, and Q254 each coordinate a divalent metal cation. C258 and C275 form a disulfide bridge. Substrate is bound by residues 375–379 (RSKVR) and 498–504 (FNALGGD).

Belongs to the 5'-nucleotidase family. Co(2+) is required as a cofactor.

It is found in the periplasm. The enzyme catalyses UDP-sugar + H2O = UMP + alpha-D-aldose 1-phosphate.. It catalyses the reaction a ribonucleoside 5'-phosphate + H2O = a ribonucleoside + phosphate. Its function is as follows. Degradation of external UDP-glucose to uridine monophosphate and glucose-1-phosphate, which can then be used by the cell. The chain is Protein UshA (ushA) from Yersinia enterocolitica serotype O:8 / biotype 1B (strain NCTC 13174 / 8081).